A 216-amino-acid chain; its full sequence is GTP-binding nuclear protein Ran, testis-specific isoform (216 aa).

Position 2 is an N-acetylalanine (Ala2). One can recognise a Small GTPase Ran-type domain in the interval 7 to 171 (PQVQFKVVLV…FWLARKLIGD (165 aa)). 17–24 (GDGGTGKT) serves as a coordination point for GTP. Thr24 bears the Phosphothreonine mark. The tract at residues 37–45 (KEYVATLGV) is switch-I. Position 60 is an N6-acetyllysine (Lys60). A GTP-binding site is contributed by 65-69 (DTAGQ). The interval 68–84 (GQEKFGGLRDGYYIQAQ) is switch-II. N6-acetyllysine; alternate is present on Lys71. Lys71 participates in a covalent cross-link: Glycyl lysine isopeptide (Lys-Gly) (interchain with G-Cter in SUMO2); alternate. Lys71 participates in a covalent cross-link: Glycyl lysine isopeptide (Lys-Gly) (interchain with G-Cter in ubiquitin); alternate. Lys99 carries the N6-acetyllysine modification. 122–125 (NKVD) is a GTP binding site. Residue Lys134 is modified to N6-acetyllysine. Residue Lys159 is modified to N6-acetyllysine; alternate. N6-succinyllysine; alternate is present on Lys159.

The protein belongs to the small GTPase superfamily. Ran family. Testis specific.

The protein resides in the nucleus. It catalyses the reaction GTP + H2O = GDP + phosphate + H(+). Functionally, GTP-binding protein involved in nucleocytoplasmic transport. Required for the import of protein into the nucleus and also for RNA export. Involved in chromatin condensation and control of cell cycle. This chain is GTP-binding nuclear protein Ran, testis-specific isoform (Rasl2-9), found in Mus musculus (Mouse).